The chain runs to 375 residues: Formate dehydrogenase (375 aa).

Positions 94 and 120 each coordinate substrate. NAD(+)-binding positions include R175 to I176, D196, P231 to K235, T257, D283, H312 to G315, and S358.

The protein belongs to the D-isomer specific 2-hydroxyacid dehydrogenase family. FDH subfamily. Homodimer.

It is found in the cytoplasm. It carries out the reaction formate + NAD(+) = CO2 + NADH. Catalyzes the NAD(+)-dependent oxidation of formate to carbon dioxide. Formate oxidation is the final step in the methanol oxidation pathway in methylotrophic microorganisms. Has a role in the detoxification of exogenous formate in non-methylotrophic organisms. This Neurospora crassa (strain ATCC 24698 / 74-OR23-1A / CBS 708.71 / DSM 1257 / FGSC 987) protein is Formate dehydrogenase.